The following is a 250-amino-acid chain: Small ribosomal subunit protein uS2 (250 aa).

The protein belongs to the universal ribosomal protein uS2 family.

The sequence is that of Small ribosomal subunit protein uS2 from Paraburkholderia phytofirmans (strain DSM 17436 / LMG 22146 / PsJN) (Burkholderia phytofirmans).